Reading from the N-terminus, the 321-residue chain is Cytochrome f (321 aa).

Residues 1 to 35 (MQNTNTLNWINKLIYLSISIPIFFLILVTTYPNSV) form the signal peptide. Heme is bound by residues tyrosine 38, cysteine 58, cysteine 61, and histidine 62. A helical transmembrane segment spans residues 287 to 307 (MEGLILFFISVILAQVFLVLK).

This sequence belongs to the cytochrome f family. The 4 large subunits of the cytochrome b6-f complex are cytochrome b6, subunit IV (17 kDa polypeptide, petD), cytochrome f and the Rieske protein, while the 4 small subunits are PetG, PetL, PetM and PetN. The complex functions as a dimer. Heme is required as a cofactor.

The protein localises to the plastid. It is found in the chloroplast thylakoid membrane. In terms of biological role, component of the cytochrome b6-f complex, which mediates electron transfer between photosystem II (PSII) and photosystem I (PSI), cyclic electron flow around PSI, and state transitions. The protein is Cytochrome f of Chara vulgaris (Common stonewort).